The chain runs to 309 residues: Palmitoyltransferase ZDHHC19 (309 aa).

2 helical membrane passes run 29–49 (LFAA…FAFP) and 59–79 (WAFP…LVSL). Positions 112–162 (QWCPKCCFHRPPRTYHCPWCNICVEDFDHHCKWVNNCIGHRNFRFFMLLVL) constitute a DHHC domain. C142 serves as the catalytic S-palmitoyl cysteine intermediate. Transmembrane regions (helical) follow at residues 160–180 (LVLS…IFLV) and 193–213 (IAIV…LLLL). The span at 280-294 (LHPPMSPSALNPPAP) shows a compositional bias: pro residues. The segment at 280–309 (LHPPMSPSALNPPAPTSGSLQSREGTPGAW) is disordered.

It belongs to the DHHC palmitoyltransferase family.

It is found in the golgi apparatus membrane. It localises to the cytoplasm. The protein resides in the perinuclear region. The catalysed reaction is L-cysteinyl-[protein] + hexadecanoyl-CoA = S-hexadecanoyl-L-cysteinyl-[protein] + CoA. In terms of biological role, palmitoyltransferase that mediates palmitoylation oproteins, such as RRAS and SQSTM1. Catalyzes palmitoylation of RRAS, leading to increased cell viability. Acts as a positive regulator of autophagy by mediating palmitoylation of SQSTM1, promoting affinity between SQSTM1 and ATG8 proteins and recruitment of ubiquitinated cargo proteins to autophagosomes. (Microbial infection) Promotes Chikungunya virus (CHIKV) replication by mediating viral nsp1 palmitoylation. The protein is Palmitoyltransferase ZDHHC19 of Homo sapiens (Human).